A 130-amino-acid polypeptide reads, in one-letter code: Albumin-1 B (130 aa).

The signal sequence occupies residues 1–26 (MASVKLASLMVLFATLGMFLTKNVGA). 3 disulfide bridges follow: cysteine 29/cysteine 46, cysteine 33/cysteine 48, and cysteine 41/cysteine 58. 2 propeptides span residues 64-69 (VFLRTN) and 123-130 (LLKSVSTA).

Post-translationally, the C-terminal glycine may be removed from PA1b. In terms of tissue distribution, major component of both the cotyledons and embryonic axes of mature seeds.

Functionally, PA1b binds to basic 7S globulin (BG) and stimulates its phosphorylation activity. Involved in the signal transduction system to regulate the growth and differentiation as a hormone peptide. Toxic to various insects through binding to a high affinity binding site in the insect gut. In Pisum sativum (Garden pea), this protein is Albumin-1 B.